Reading from the N-terminus, the 508-residue chain is Hydroxymethylglutaryl-CoA synthase, mitochondrial (508 aa).

The transit peptide at M1–S37 directs the protein to the mitochondrion. An N6-succinyllysine modification is found at K52. (3S)-3-hydroxy-3-methylglutaryl-CoA contacts are provided by E80 and A81. The Proton donor/acceptor role is filled by E132. C166, N204, and T208 together coordinate (3S)-3-hydroxy-3-methylglutaryl-CoA. C166 functions as the Acyl-thioester intermediate in the catalytic mechanism. The residue at position 243 (K243) is an N6-acetyllysine. N6-acetyllysine; alternate is present on K256. K256 is modified (N6-succinyllysine; alternate). Residues S258 and H301 each contribute to the (3S)-3-hydroxy-3-methylglutaryl-CoA site. H301 (proton donor/acceptor) is an active-site residue. K306 is modified (N6-acetyllysine). K310 lines the (3S)-3-hydroxy-3-methylglutaryl-CoA pocket. At K310 the chain carries N6-acetyllysine; alternate. Position 310 is an N6-succinyllysine; alternate (K310). N6-succinyllysine is present on K333. An N6-acetyllysine; alternate mark is found at K342, K350, K354, and K358. An N6-succinyllysine; alternate mark is found at K342, K350, K354, and K358. Residues N380 and S414 each coordinate (3S)-3-hydroxy-3-methylglutaryl-CoA. At S433 the chain carries Phosphoserine. K437 is subject to N6-acetyllysine. 2 positions are modified to phosphoserine: S440 and S456. At K473 the chain carries N6-acetyllysine; alternate. At K473 the chain carries N6-succinyllysine; alternate.

This sequence belongs to the thiolase-like superfamily. HMG-CoA synthase family. In terms of assembly, homodimer. Succinylated. Desuccinylated by SIRT5. Succinylation, at least at Lys-310, inhibits the enzymatic activity.

It is found in the mitochondrion. It catalyses the reaction acetoacetyl-CoA + acetyl-CoA + H2O = (3S)-3-hydroxy-3-methylglutaryl-CoA + CoA + H(+). It participates in metabolic intermediate biosynthesis; (R)-mevalonate biosynthesis; (R)-mevalonate from acetyl-CoA: step 2/3. Its function is as follows. Catalyzes the first irreversible step in ketogenesis, condensing acetyl-CoA to acetoacetyl-CoA to form HMG-CoA, which is converted by HMG-CoA reductase (HMGCR) into mevalonate. The polypeptide is Hydroxymethylglutaryl-CoA synthase, mitochondrial (HMGCS2) (Sus scrofa (Pig)).